Consider the following 200-residue polypeptide: MEEEIKETSEDKEEENTEAEAVENNEKSEENAGNVEEDEITALKKRIEELENESADMKNKYMYAMAEAENIRKRTAKEKADSIKRANKGLLLSLLTFMDNFERALKAGEQDSNVQGSEYYKGIELIHKQFIDFMHDNGVSEIESLGEEFDPNVHEALTMIEVPDIDKEKVVEVYAKGYKLNDELLRTAKVVVGKPAAAKE.

The span at 1 to 23 (MEEEIKETSEDKEEENTEAEAVE) shows a compositional bias: acidic residues. Residues 1–39 (MEEEIKETSEDKEEENTEAEAVENNEKSEENAGNVEEDE) form a disordered region.

It belongs to the GrpE family. As to quaternary structure, homodimer.

It is found in the cytoplasm. Participates actively in the response to hyperosmotic and heat shock by preventing the aggregation of stress-denatured proteins, in association with DnaK and GrpE. It is the nucleotide exchange factor for DnaK and may function as a thermosensor. Unfolded proteins bind initially to DnaJ; upon interaction with the DnaJ-bound protein, DnaK hydrolyzes its bound ATP, resulting in the formation of a stable complex. GrpE releases ADP from DnaK; ATP binding to DnaK triggers the release of the substrate protein, thus completing the reaction cycle. Several rounds of ATP-dependent interactions between DnaJ, DnaK and GrpE are required for fully efficient folding. This chain is Protein GrpE, found in Brachyspira hyodysenteriae (strain ATCC 49526 / WA1).